We begin with the raw amino-acid sequence, 367 residues long: Protein-glutamate methylesterase/protein-glutamine glutaminase (367 aa).

The region spanning 6–123 (RVLVVDDSAF…SLGIKQLADE (118 aa)) is the Response regulatory domain. At Asp57 the chain carries 4-aspartylphosphate. Positions 165–361 (ISKKEIVVVI…DILLKKVNEY (197 aa)) constitute a CheB-type methylesterase domain. Residues Ser177, His204, and Asp303 contribute to the active site.

This sequence belongs to the CheB family. In terms of processing, phosphorylated by CheA. Phosphorylation of the N-terminal regulatory domain activates the methylesterase activity.

It is found in the cytoplasm. The enzyme catalyses [protein]-L-glutamate 5-O-methyl ester + H2O = L-glutamyl-[protein] + methanol + H(+). The catalysed reaction is L-glutaminyl-[protein] + H2O = L-glutamyl-[protein] + NH4(+). Its function is as follows. Involved in chemotaxis. Part of a chemotaxis signal transduction system that modulates chemotaxis in response to various stimuli. Catalyzes the demethylation of specific methylglutamate residues introduced into the chemoreceptors (methyl-accepting chemotaxis proteins or MCP) by CheR. Also mediates the irreversible deamidation of specific glutamine residues to glutamic acid. In Caldanaerobacter subterraneus subsp. tengcongensis (strain DSM 15242 / JCM 11007 / NBRC 100824 / MB4) (Thermoanaerobacter tengcongensis), this protein is Protein-glutamate methylesterase/protein-glutamine glutaminase.